A 234-amino-acid chain; its full sequence is 2-amino-5-formylamino-6-ribosylaminopyrimidin-4(3H)-one 5'-monophosphate deformylase (234 aa).

Fe cation is bound by residues E30, H32, D41, and H111.

It belongs to the creatininase superfamily. FAPy deformylase family. Homodimer. Fe(2+) serves as cofactor. Requires Zn(2+) as cofactor.

It catalyses the reaction 2-amino-5-formylamino-6-(5-phospho-D-ribosylamino)pyrimidin-4(3H)-one + H2O = 2,5-diamino-6-(1-D-ribosylamino)pyrimidin-4(3H)-one 5'-phosphate + formate + H(+). It participates in cofactor biosynthesis; coenzyme F420 biosynthesis. It functions in the pathway cofactor biosynthesis; riboflavin biosynthesis. Functionally, catalyzes the hydrolysis of the formamide of 2-amino-5-formylamino-6-ribosylamino-4(3H)-pyrimidinone 5'-monophosphate (FAPy) to form 2,5-diamino-6-ribosylamino-4(3H)-pyrimidinone 5'-phosphate (APy). In Methanothermobacter thermautotrophicus (strain ATCC 29096 / DSM 1053 / JCM 10044 / NBRC 100330 / Delta H) (Methanobacterium thermoautotrophicum), this protein is 2-amino-5-formylamino-6-ribosylaminopyrimidin-4(3H)-one 5'-monophosphate deformylase.